The sequence spans 365 residues: tRNA-specific 2-thiouridylase MnmA (365 aa).

Residues 12–19 (AMSGGVDS) and Met38 contribute to the ATP site. The active-site Nucleophile is Cys108. A disulfide bridge links Cys108 with Cys206. Residue Gly132 coordinates ATP. The segment at 156-158 (KDQ) is interaction with tRNA. Cys206 serves as the catalytic Cysteine persulfide intermediate. An interaction with tRNA region spans residues 312-313 (RY).

The protein belongs to the MnmA/TRMU family.

It is found in the cytoplasm. The catalysed reaction is S-sulfanyl-L-cysteinyl-[protein] + uridine(34) in tRNA + AH2 + ATP = 2-thiouridine(34) in tRNA + L-cysteinyl-[protein] + A + AMP + diphosphate + H(+). Its function is as follows. Catalyzes the 2-thiolation of uridine at the wobble position (U34) of tRNA, leading to the formation of s(2)U34. In Carboxydothermus hydrogenoformans (strain ATCC BAA-161 / DSM 6008 / Z-2901), this protein is tRNA-specific 2-thiouridylase MnmA.